The sequence spans 244 residues: Protein crossbronx (244 aa).

The region spanning Q20–E176 is the UBC core domain. The disordered stretch occupies residues A209–E244.

Belongs to the ubiquitin-conjugating enzyme family. FTS subfamily.

In Drosophila simulans (Fruit fly), this protein is Protein crossbronx (cbx).